Here is a 292-residue protein sequence, read N- to C-terminus: 4-hydroxy-tetrahydrodipicolinate synthase (292 aa).

A pyruvate-binding site is contributed by threonine 45. Tyrosine 133 functions as the Proton donor/acceptor in the catalytic mechanism. Lysine 161 (schiff-base intermediate with substrate) is an active-site residue. Isoleucine 203 contributes to the pyruvate binding site.

This sequence belongs to the DapA family. In terms of assembly, homotetramer; dimer of dimers.

The protein resides in the cytoplasm. The catalysed reaction is L-aspartate 4-semialdehyde + pyruvate = (2S,4S)-4-hydroxy-2,3,4,5-tetrahydrodipicolinate + H2O + H(+). It participates in amino-acid biosynthesis; L-lysine biosynthesis via DAP pathway; (S)-tetrahydrodipicolinate from L-aspartate: step 3/4. Its function is as follows. Catalyzes the condensation of (S)-aspartate-beta-semialdehyde [(S)-ASA] and pyruvate to 4-hydroxy-tetrahydrodipicolinate (HTPA). The polypeptide is 4-hydroxy-tetrahydrodipicolinate synthase (Klebsiella pneumoniae subsp. pneumoniae (strain ATCC 700721 / MGH 78578)).